Here is a 207-residue protein sequence, read N- to C-terminus: Glycerol-3-phosphate acyltransferase (207 aa).

Transmembrane regions (helical) follow at residues 8–28 (NIVF…LILA), 64–84 (LGIA…LVGI), 92–112 (TLWA…YLGL), 122–142 (LGVY…VWIV), 154–174 (SLLG…GLGI), and 176–196 (SNIP…PNIV).

This sequence belongs to the PlsY family. As to quaternary structure, probably interacts with PlsX.

The protein localises to the cell inner membrane. It carries out the reaction an acyl phosphate + sn-glycerol 3-phosphate = a 1-acyl-sn-glycero-3-phosphate + phosphate. It functions in the pathway lipid metabolism; phospholipid metabolism. Catalyzes the transfer of an acyl group from acyl-phosphate (acyl-PO(4)) to glycerol-3-phosphate (G3P) to form lysophosphatidic acid (LPA). This enzyme utilizes acyl-phosphate as fatty acyl donor, but not acyl-CoA or acyl-ACP. The chain is Glycerol-3-phosphate acyltransferase from Aliarcobacter butzleri (strain RM4018) (Arcobacter butzleri).